Here is a 244-residue protein sequence, read N- to C-terminus: Probable hydrolase R7 (244 aa).

The signal sequence occupies residues 1 to 20 (MTKPFILLVPGSFAPETIYA). Active-site charge relay system residues include D192 and H224. Residue N227 is glycosylated (N-linked (GlcNAc...) asparagine).

This sequence belongs to the AB hydrolase superfamily.

It participates in secondary metabolite biosynthesis. Functionally, probable hydrolase; part of the gene cluster that mediates the biosynthesis of squalestatin S1 (SQS1, also known as zaragozic acid A), a lead compound for the treatment of hyper-cholesterolemia by targeting squalene synthase (SS). Both phenylalanine and benzoic acid are known precursors of SQS1 and so it is unsurprising that the cluster also contains genes potentially involved in benzoate production such as phenyl-alanine ammonia lysase (PAL) M7, which catalyzes the first step in the degradation of phenylalanine, or the NADP-dependent dehydrogenase M3. The cluster contains two PKS encoding genes. The tetraketide synthase is responsible for the biosynthesis of the tetraketide sidechain of SQS1. The biosynthesis must involve 3 rounds of chain extension. After the first and second rounds methyl-transfer occurs, and in all rounds of extension the ketoreductase and dehydratase areactive. The enoyl reductase and C-MeT are not active in the final round of extension. The other PKS is therefore likely to encode squalestatin hexaketide synthase (SQHKS). The hexaketide main chain is initiated by benzoate which is an unusual starter unit for a highly reducing polyketide synthase. The cluster also contains a gene encoding a citrate synthase-like protein R3 presumably involved in linking the hexaketide to the oxaloacetate moiety. Formation of the tetraketide CoA may be catalyzed by the M9 CoA ligase, but the mechanism of release of the tetraketide and the hexaketide from their respective PKS remains unknown, although the cluster encodes a potential esterase (M8) and a possible hydrolase (M10) which could be involved in these processes. Two acyltransferases (AT), M4 and R4, are also encoded in the cluster. M4 is responsible for loading of the tetraketide sidechain from CoA onto the squalestatin core as the final step of biosynthesis. M4 appears to have a broad substrate selectivity for its acyl CoA substrate, allowing the in vitro synthesis of novel squalestatins. The biosynthesis of SQS1 requires several oxidative steps likely performed by oxidoreductases M1, R1 and R2. Finally, in support of the identification of the cluster as being responsible for SQS1 production, the cluster contains a gene encoding a putative squalene synthase (SS) R6, suggesting a likely mechanism for self-resistance. In Phoma sp. (strain ATCC 20986 / MF5453), this protein is Probable hydrolase R7.